The primary structure comprises 62 residues: Disintegrin schistatin-like subunit A (62 aa).

The Disintegrin domain maps to 1–62 (SVNPCCDPVI…TTDCPRNRYN (62 aa)). Disulfide bonds link Cys-5-Cys-28, Cys-19-Cys-25, Cys-24-Cys-49, and Cys-37-Cys-56. Positions 41 to 43 (RGD) match the Cell attachment site motif.

This sequence belongs to the disintegrin family. Dimeric disintegrin subfamily. Heterodimer with subunit B; disulfide-linked. Expressed by the venom gland.

The protein localises to the secreted. In terms of biological role, may bind to both alpha-IIb/beta-3 (ITGA2B/ITGB3) and alpha-V/beta-3 (ITGAV/ITGB3) integrins, and may inhibit platelet aggregation. The sequence is that of Disintegrin schistatin-like subunit A from Echis carinatus (Saw-scaled viper).